The chain runs to 922 residues: GPI inositol-deacylase (922 aa).

Residues 1-11 (MFLHSVNLWNL) lie on the Cytoplasmic side of the membrane. A helical membrane pass occupies residues 12–32 (AFYVFMVFLATLGLWDVFFGF). Residues 33–597 (EENKCSMSYM…GQVVRFHGGA (565 aa)) are Lumenal-facing. Ser174 is an active-site residue. Residues Asn363, Asn402, and Asn558 are each glycosylated (N-linked (GlcNAc...) asparagine). Residues 598 to 618 (LPAYVVSSILLAYGGQLYSLL) form a helical membrane-spanning segment. The Cytoplasmic portion of the chain corresponds to 619-641 (STGYCLEYSTILDKEAKPYKVDP). The helical transmembrane segment at 642–662 (FVIMIKFLLGYKWFKELWDAV) threads the bilayer. Residues 663–668 (LLPELD) lie on the Lumenal side of the membrane. The helical transmembrane segment at 669 to 689 (AIVLTSQSMCFPLVSLILFLF) threads the bilayer. The Cytoplasmic portion of the chain corresponds to 690–694 (GTCTA). The helical transmembrane segment at 695–715 (YWSGLLSSTSVQLLSSLWLAL) threads the bilayer. Topologically, residues 716 to 733 (KRPAELPKDIKVMSPDLP) are lumenal. The helical transmembrane segment at 734–754 (VLTVVFLIVSWTTCGALAILL) threads the bilayer. Residues 755–817 (SYLYYVFKVV…DAEDSLRMHS (63 aa)) are Cytoplasmic-facing. The segment at 776 to 798 (NQPVNPKHSRRSEKKSNHHKDSA) is disordered. A compositionally biased stretch (basic residues) spans 782 to 793 (KHSRRSEKKSNH). A helical membrane pass occupies residues 818 to 838 (TVINLLTWVVLLSMPSLIYWL). At 839–894 (KNLRYYFKLSPDPCKPLAFLLIPAIAILGNTHTVSVKSSKLLKTVSQFPLPLAVGV) the chain is on the lumenal side. Residues 895-915 (IAFGSSHLYRVPCFVIIPLVF) form a helical membrane-spanning segment. The Cytoplasmic segment spans residues 916–922 (HALCNFM).

The protein belongs to the GPI inositol-deacylase family.

The protein localises to the endoplasmic reticulum membrane. In terms of biological role, GPI inositol-deacylase that catalyzes the remove of the acyl chain linked to the 2-OH position of inositol ring from the GPI-anchored protein (GPI-AP) in the endoplasmic reticulum. Initiates the post-attachment remodeling phase of GPI-AP biogenesis and participates in endoplasmic reticulum (ER)-to-Golgi transport of GPI-anchored protein. The polypeptide is GPI inositol-deacylase (Mus musculus (Mouse)).